Reading from the N-terminus, the 337-residue chain is UDP-3-O-acylglucosamine N-acyltransferase (337 aa).

His238 acts as the Proton acceptor in catalysis.

The protein belongs to the transferase hexapeptide repeat family. LpxD subfamily. As to quaternary structure, homotrimer.

It catalyses the reaction a UDP-3-O-[(3R)-3-hydroxyacyl]-alpha-D-glucosamine + a (3R)-hydroxyacyl-[ACP] = a UDP-2-N,3-O-bis[(3R)-3-hydroxyacyl]-alpha-D-glucosamine + holo-[ACP] + H(+). The protein operates within bacterial outer membrane biogenesis; LPS lipid A biosynthesis. Functionally, catalyzes the N-acylation of UDP-3-O-acylglucosamine using 3-hydroxyacyl-ACP as the acyl donor. Is involved in the biosynthesis of lipid A, a phosphorylated glycolipid that anchors the lipopolysaccharide to the outer membrane of the cell. This Xanthomonas axonopodis pv. citri (strain 306) protein is UDP-3-O-acylglucosamine N-acyltransferase.